A 331-amino-acid polypeptide reads, in one-letter code: Probable protein phosphatase 2C 72 (331 aa).

Residues 43-324 enclose the PPM-type phosphatase domain; the sequence is LGSVCSIQGT…DDITVICLFL (282 aa). Asp78, Gly79, Asp268, and Asp315 together coordinate Mn(2+).

The protein belongs to the PP2C family. Mg(2+) is required as a cofactor. Requires Mn(2+) as cofactor.

It carries out the reaction O-phospho-L-seryl-[protein] + H2O = L-seryl-[protein] + phosphate. The enzyme catalyses O-phospho-L-threonyl-[protein] + H2O = L-threonyl-[protein] + phosphate. This Arabidopsis thaliana (Mouse-ear cress) protein is Probable protein phosphatase 2C 72.